The primary structure comprises 214 residues: tRNA (guanine-N(7)-)-methyltransferase (214 aa).

4 residues coordinate S-adenosyl-L-methionine: Glu-43, Glu-68, Asp-95, and Asp-117. Residue Asp-117 is part of the active site. Substrate is bound by residues Lys-121, Asp-153, and 190–193; that span reads TEYE.

The protein belongs to the class I-like SAM-binding methyltransferase superfamily. TrmB family.

It catalyses the reaction guanosine(46) in tRNA + S-adenosyl-L-methionine = N(7)-methylguanosine(46) in tRNA + S-adenosyl-L-homocysteine. It functions in the pathway tRNA modification; N(7)-methylguanine-tRNA biosynthesis. Its function is as follows. Catalyzes the formation of N(7)-methylguanine at position 46 (m7G46) in tRNA. This Staphylococcus haemolyticus (strain JCSC1435) protein is tRNA (guanine-N(7)-)-methyltransferase.